The following is a 486-amino-acid chain: NADH-quinone oxidoreductase subunit N (486 aa).

Helical transmembrane passes span 14–34 (SIAPMMVLSLFAVFILVLNFI), 45–65 (MLAILGLAINIFFLFGYSGIV), 77–97 (FAFISMIIILLFSILFLPLTL), 105–125 (CSLAEFYALYLFMIVGYEFMV), 130–150 (LIVILVGLETSSLALYTLIAL), 163–183 (YFTMGALSTGFFCFAIVIFYL), 203–223 (ILIATACIFLICSIGFKLSLI), 237–257 (SEVMAGYISIVPKIAGFIVAM), 268–288 (IAFIQISLYIIAVLTMTLANI), 299–319 (MLAFSSISHAGFVLCAVVIGT), 326–346 (LFLYWLMFSFANLGAFSVLWF), 377–397 (FLMALFMISLAGIPPFSVFWG), 409–429 (GFIFMAVIMAINSAIAVYYYL), and 459–479 (FIITFSAILCILAPFMVKFWT).

This sequence belongs to the complex I subunit 2 family. As to quaternary structure, NDH-1 is composed of 14 different subunits. Subunits NuoA, H, J, K, L, M, N constitute the membrane sector of the complex.

It is found in the cell inner membrane. It carries out the reaction a quinone + NADH + 5 H(+)(in) = a quinol + NAD(+) + 4 H(+)(out). Its function is as follows. NDH-1 shuttles electrons from NADH, via FMN and iron-sulfur (Fe-S) centers, to quinones in the respiratory chain. The immediate electron acceptor for the enzyme in this species is believed to be ubiquinone. Couples the redox reaction to proton translocation (for every two electrons transferred, four hydrogen ions are translocated across the cytoplasmic membrane), and thus conserves the redox energy in a proton gradient. This Campylobacter hominis (strain ATCC BAA-381 / DSM 21671 / CCUG 45161 / LMG 19568 / NCTC 13146 / CH001A) protein is NADH-quinone oxidoreductase subunit N.